Reading from the N-terminus, the 454-residue chain is Bifunctional protein GlmU (454 aa).

Positions 1 to 226 (MALNVVILAA…AIEVEGANNR (226 aa)) are pyrophosphorylase. UDP-N-acetyl-alpha-D-glucosamine is bound by residues 8 to 11 (LAAG), Lys-22, Gln-73, 78 to 79 (GT), 100 to 102 (YGD), Gly-137, Glu-151, Asn-166, and Asn-224. Asp-102 is a binding site for Mg(2+). Residue Asn-224 participates in Mg(2+) binding. Residues 227 to 247 (VQLAQLERAYQAREAEKLMIA) are linker. The segment at 248–454 (GANLRDPSRI…GWQRPVKIKK (207 aa)) is N-acetyltransferase. The UDP-N-acetyl-alpha-D-glucosamine site is built by Arg-330 and Lys-348. The Proton acceptor role is filled by His-360. 2 residues coordinate UDP-N-acetyl-alpha-D-glucosamine: Tyr-363 and Asn-374. Acetyl-CoA contacts are provided by residues Ala-377, 383–384 (NY), Ser-402, Ala-420, and Arg-437.

It in the N-terminal section; belongs to the N-acetylglucosamine-1-phosphate uridyltransferase family. This sequence in the C-terminal section; belongs to the transferase hexapeptide repeat family. In terms of assembly, homotrimer. The cofactor is Mg(2+).

It localises to the cytoplasm. It catalyses the reaction alpha-D-glucosamine 1-phosphate + acetyl-CoA = N-acetyl-alpha-D-glucosamine 1-phosphate + CoA + H(+). The enzyme catalyses N-acetyl-alpha-D-glucosamine 1-phosphate + UTP + H(+) = UDP-N-acetyl-alpha-D-glucosamine + diphosphate. The protein operates within nucleotide-sugar biosynthesis; UDP-N-acetyl-alpha-D-glucosamine biosynthesis; N-acetyl-alpha-D-glucosamine 1-phosphate from alpha-D-glucosamine 6-phosphate (route II): step 2/2. It participates in nucleotide-sugar biosynthesis; UDP-N-acetyl-alpha-D-glucosamine biosynthesis; UDP-N-acetyl-alpha-D-glucosamine from N-acetyl-alpha-D-glucosamine 1-phosphate: step 1/1. Its pathway is bacterial outer membrane biogenesis; LPS lipid A biosynthesis. Functionally, catalyzes the last two sequential reactions in the de novo biosynthetic pathway for UDP-N-acetylglucosamine (UDP-GlcNAc). The C-terminal domain catalyzes the transfer of acetyl group from acetyl coenzyme A to glucosamine-1-phosphate (GlcN-1-P) to produce N-acetylglucosamine-1-phosphate (GlcNAc-1-P), which is converted into UDP-GlcNAc by the transfer of uridine 5-monophosphate (from uridine 5-triphosphate), a reaction catalyzed by the N-terminal domain. The protein is Bifunctional protein GlmU of Shewanella sp. (strain MR-4).